A 128-amino-acid chain; its full sequence is Class I hydrophobin 19 (128 aa).

Disulfide bonds link Cys48-Cys107, Cys55-Cys101, Cys56-Cys88, and Cys108-Cys121. N-linked (GlcNAc...) asparagine glycosylation occurs at Asn110.

Belongs to the fungal hydrophobin family. As to quaternary structure, self-assembles to form functional amyloid fibrils called rodlets. Self-assembly into fibrillar rodlets occurs spontaneously at hydrophobic:hydrophilic interfaces and the rodlets further associate laterally to form amphipathic monolayers.

Its subcellular location is the secreted. The protein resides in the cell wall. Aerial growth, conidiation, and dispersal of filamentous fungi in the environment rely upon a capability of their secreting small amphipathic proteins called hydrophobins (HPBs) with low sequence identity. Class I can self-assemble into an outermost layer of rodlet bundles on aerial cell surfaces, conferring cellular hydrophobicity that supports fungal growth, development and dispersal; whereas Class II form highly ordered films at water-air interfaces through intermolecular interactions but contribute nothing to the rodlet structure. The chain is Class I hydrophobin 19 from Pleurotus ostreatus (strain PC15) (Oyster mushroom).